The sequence spans 364 residues: Fructose-bisphosphate aldolase B (364 aa).

At A2 the chain carries N-acetylalanine. K13 is subject to N6-succinyllysine. S36 carries the post-translational modification Phosphoserine. At T39 the chain carries Phosphothreonine. R43 lines the beta-D-fructose 1,6-bisphosphate pocket. S89 carries the post-translational modification Phosphoserine. T119 carries the phosphothreonine modification. K121 bears the N6-succinyllysine mark. S132 carries the phosphoserine modification. The active-site Proton acceptor is E188. K230 (schiff-base intermediate with dihydroxyacetone-P) is an active-site residue. A phosphoserine mark is found at S272, S276, S299, and S301. A beta-D-fructose 1,6-bisphosphate-binding site is contributed by 272 to 274 (SGG). Residue R304 coordinates beta-D-fructose 1,6-bisphosphate. Phosphoserine is present on S309. K317 is subject to N6-succinyllysine.

The protein belongs to the class I fructose-bisphosphate aldolase family. Homotetramer. Interacts with BBS1, BBS2, BBS4 and BBS7. Forms a ternary complex with G6PD and TP53; this interaction is direct.

Its subcellular location is the cytoplasm. The protein localises to the cytosol. It localises to the cytoskeleton. It is found in the microtubule organizing center. The protein resides in the centrosome. Its subcellular location is the centriolar satellite. It catalyses the reaction beta-D-fructose 1,6-bisphosphate = D-glyceraldehyde 3-phosphate + dihydroxyacetone phosphate. The enzyme catalyses beta-D-fructose 1-phosphate = D-glyceraldehyde + dihydroxyacetone phosphate. It participates in carbohydrate degradation; glycolysis; D-glyceraldehyde 3-phosphate and glycerone phosphate from D-glucose: step 4/4. It functions in the pathway carbohydrate biosynthesis; gluconeogenesis. Its pathway is carbohydrate metabolism; fructose metabolism. In terms of biological role, catalyzes the aldol cleavage of fructose 1,6-biphosphate to form two triosephosphates dihydroxyacetone phosphate and D-glyceraldehyde 3-phosphate in glycolysis as well as the reverse stereospecific aldol addition reaction in gluconeogenesis. In fructolysis, metabolizes fructose 1-phosphate derived from the phosphorylation of dietary fructose by fructokinase into dihydroxyacetone phosphate and D-glyceraldehyde. Acts as an adapter independently of its enzymatic activity, exerts a tumor suppressor role by stabilizing the ternary complex with G6PD and TP53 to inhibit G6PD activity and keep oxidative pentose phosphate metabolism in check. This is Fructose-bisphosphate aldolase B (ALDOB) from Oryctolagus cuniculus (Rabbit).